Here is a 76-residue protein sequence, read N- to C-terminus: Defensin-like protein 164 (76 aa).

A signal peptide spans 1–25 (MAKLLCSYLFICMFVLSGFLVFSSA). Cystine bridges form between C31–C76, C41–C61, C46–C70, and C50–C72.

Belongs to the DEFL family.

It localises to the secreted. This is Defensin-like protein 164 (LCR38) from Arabidopsis thaliana (Mouse-ear cress).